The following is a 155-amino-acid chain: Fibroblast growth factor 1 (155 aa).

Positions 1–15 are excised as a propeptide; that stretch reads MAEGDITTFNAITES. Residue N33 coordinates heparin. The heparin-binding stretch occupies residues 127 to 143; that stretch reads KKNGASKKGSRTHYGQK.

The protein belongs to the heparin-binding growth factors family.

It localises to the secreted. The protein resides in the cytoplasm. The protein localises to the cell cortex. It is found in the cytosol. Its subcellular location is the nucleus. Functionally, plays an important role in the regulation of cell survival, cell division, angiogenesis, cell differentiation and cell migration. Functions as a potent mitogen in vitro. Acts as a ligand for FGFR1 and integrins. Binds to FGFR1 in the presence of heparin leading to FGFR1 dimerization and activation via sequential autophosphorylation on tyrosine residues which act as docking sites for interacting proteins, leading to the activation of several signaling cascades. Binds to integrins. Its binding to integrins and subsequent ternary complex formation with integrins and FGFR1 are essential for FGF1 signaling. This is Fibroblast growth factor 1 (fgf1) from Xenopus laevis (African clawed frog).